We begin with the raw amino-acid sequence, 283 residues long: Elongation factor Ts (283 aa).

Positions 80-83 (TDFV) are involved in Mg(2+) ion dislocation from EF-Tu.

This sequence belongs to the EF-Ts family.

The protein resides in the cytoplasm. Its function is as follows. Associates with the EF-Tu.GDP complex and induces the exchange of GDP to GTP. It remains bound to the aminoacyl-tRNA.EF-Tu.GTP complex up to the GTP hydrolysis stage on the ribosome. In Cronobacter sakazakii (strain ATCC BAA-894) (Enterobacter sakazakii), this protein is Elongation factor Ts.